Here is a 300-residue protein sequence, read N- to C-terminus: Cation-efflux pump FieF (300 aa).

Helical transmembrane passes span 12–32 (AALSATALASILLIIKIFAWW), 40–60 (LAALVDSLVDLAASLTNLFVV), 82–102 (AALAQSMFISGSALFLFLTGF), and 114–134 (PSIGIGVTLVALFSTLILVTF). The Zn(2+) site is built by aspartate 45 and aspartate 49. Zn(2+) contacts are provided by histidine 153 and aspartate 157. Transmembrane regions (helical) follow at residues 155–175 (QSDVLMNGAILIALALSWYGF) and 178–198 (ADALFALGIGVYILYSALRMG).

Belongs to the cation diffusion facilitator (CDF) transporter (TC 2.A.4) family. FieF subfamily. As to quaternary structure, homodimer.

It localises to the cell inner membrane. It catalyses the reaction Zn(2+)(in) + H(+)(out) = Zn(2+)(out) + H(+)(in). The catalysed reaction is Cd(2+)(in) + H(+)(out) = Cd(2+)(out) + H(+)(in). It carries out the reaction Fe(2+)(in) + H(+)(out) = Fe(2+)(out) + H(+)(in). Divalent metal cation transporter which exports Zn(2+), Cd(2+) and possibly Fe(2+). May be involved in zinc and iron detoxification by efflux. This chain is Cation-efflux pump FieF, found in Yersinia pestis bv. Antiqua (strain Antiqua).